The primary structure comprises 3430 residues: Genome polyprotein (3430 aa).

The interval 2–15 (SKKPGGPGKNRAVN) is interaction with host EXOC1. Topologically, residues 2-105 (SKKPGGPGKN…NRRSTKQKKR (104 aa)) are cytoplasmic. The tract at residues 37 to 72 (LIDGKGPIRFVLALLAFFRFTAIAPTRAVLDRWRGV) is hydrophobic; homodimerization of capsid protein C. The propeptide at 106–123 (GGTAGFTILLGLIACAGA) is ER anchor for the capsid protein C, removed in mature form by serine protease NS3. Residues 106–126 (GGTAGFTILLGLIACAGAVTL) form a helical membrane-spanning segment. The Extracellular portion of the chain corresponds to 127–248 (SNFQGKVMMT…KATRYLVKTE (122 aa)). N-linked (GlcNAc...) asparagine; by host glycosylation is present at asparagine 138. A helical membrane pass occupies residues 249–269 (SWILRNPGYALVAAVIGWMLG). The Cytoplasmic segment spans residues 270–275 (SNTMQR). A helical transmembrane segment spans residues 276 to 290 (VVFAILLLLVAPAYS). The Extracellular portion of the chain corresponds to 291–739 (FNCLGMSNRD…QVFGGAFRSL (449 aa)). 6 cysteine pairs are disulfide-bonded: cysteine 293/cysteine 320, cysteine 350/cysteine 406, cysteine 364/cysteine 395, cysteine 382/cysteine 411, cysteine 476/cysteine 574, and cysteine 591/cysteine 622. Residues 388-401 (DRGWGNGCGLFGKG) form a fusion peptide region. Residues 740–760 (FGGMSWITQGLLGALLLWMGI) traverse the membrane as a helical segment. Over 761 to 766 (NARDRS) the chain is Cytoplasmic. Residues 767–787 (IAMTFLAVGGVLLFLSVNVHA) traverse the membrane as a helical segment. Topologically, residues 788 to 1212 (DTGCAIDIGR…AFAEANSGGD (425 aa)) are extracellular. 2 cysteine pairs are disulfide-bonded: cysteine 791-cysteine 802 and cysteine 842-cysteine 930. N-linked (GlcNAc...) asparagine; by host glycosylation is found at asparagine 917, asparagine 962, and asparagine 994. 4 disulfide bridges follow: cysteine 966-cysteine 1010, cysteine 1067-cysteine 1116, cysteine 1078-cysteine 1099, and cysteine 1100-cysteine 1103. Residues 1213 to 1233 (VVHLALMATFKIQPVFLVASF) form a helical membrane-spanning segment. Over 1234–1243 (LKARWTNQES) the chain is Cytoplasmic. Residues 1244–1264 (ILLMLAAAFFQMAYYDAKNVL) form a helical membrane-spanning segment. Residues 1265–1278 (SWEVPDVLNSLSVA) lie on the Lumenal side of the membrane. The chain crosses the membrane as a helical span at residues 1279 to 1299 (WMILRAISFTNTSNVVVPLLA). At 1300–1307 (LLTPGLKC) the chain is on the cytoplasmic side. A helical membrane pass occupies residues 1308–1328 (LNLDVYRILLLMVGVGSLIKE). Residues 1329-1340 (KRSSAAKKKGAC) lie on the Lumenal side of the membrane. A helical transmembrane segment spans residues 1341–1361 (LICLALASTGVFNPMILAAGL). Residues 1362 to 1371 (MACDPNRKRG) lie on the Cytoplasmic side of the membrane. Residues 1372–1392 (WPATEVMTAVGLMFAIVGGLA) form a helical membrane-spanning segment. Over 1393 to 1395 (ELD) the chain is Lumenal. The helical transmembrane segment at 1396 to 1416 (IDSMAIPMTIAGLMFAAFVIS) threads the bilayer. Topologically, residues 1417-1473 (GKSTDMWIERTADITWESDAEITGSSERVDVRLDDDGNFQLMNDPGAPWKIWMLRMA) are cytoplasmic. The interval 1424 to 1463 (IERTADITWESDAEITGSSERVDVRLDDDGNFQLMNDPGA) is interacts with and activates NS3 protease. Residues 1474 to 1494 (CLAISAYTPWAILPSVIGFWI) constitute an intramembrane region (helical). At 1495–2170 (TLQYTKRGGV…RMALEELPDA (676 aa)) the chain is on the cytoplasmic side. Residues 1502–1679 (GGVLWDTPSP…ERMEEPAPAG (178 aa)) enclose the Peptidase S7 domain. Active-site charge relay system; for serine protease NS3 activity residues include histidine 1552, aspartate 1576, and serine 1636. Residues 1682 to 1838 (PEMLRKKQIT…ESNAPISDMQ (157 aa)) enclose the Helicase ATP-binding domain. The important for RNA-binding stretch occupies residues 1686–1689 (RKKQ). An ATP-binding site is contributed by 1695-1702 (LHPGAGKT). Positions 1786–1789 (DEAH) match the DEAH box motif. In terms of domain architecture, Helicase C-terminal spans 1849–2014 (GYEWITEYVG…GLVAQLYQPE (166 aa)). Lysine 1890 bears the N6-acetyllysine; by host mark. The segment at 2165-2169 (EELPD) is regulates the ATPase activity of NS3 helicase. Residues 2171–2191 (LQTIVLIALLSVMSLGVFFLL) traverse the membrane as a helical segment. Residues 2192–2196 (MQRKG) lie on the Lumenal side of the membrane. An intramembrane region (helical) is located at residues 2197–2217 (IGKIGLGGVILGAATFFCWMA). A topological domain (lumenal) is located at residue glutamate 2218. Residues 2219–2239 (VPGTKIAGMLLLSLLLMIVLI) form a helical membrane-spanning segment. The Cytoplasmic segment spans residues 2240 to 2254 (PEPEKQRSQTDNQLA). The helical transmembrane segment at 2255–2275 (VFLICVLTLVGAVAANEMGWL) threads the bilayer. At 2276–2309 (DKTKNDIGSLLGHRPEARETTLGVESFLLDLRPA) the chain is on the lumenal side. Residues 2310 to 2330 (TAWSLYAVTTAVLTPLLKHLI) constitute an intramembrane region (helical). The Lumenal segment spans residues 2331 to 2377 (TSDYINTSLTSINVQASALFTLARGFPFVDVGVSALLLAVGCWGQVT). Residues 2378-2398 (LTVTVTAAALLFCHYAYMVPG) form a helical membrane-spanning segment. At 2399 to 2441 (WQAEAMRSAQRRTAAGIMKNVVVDGIVATDVPELERTTPVMQK) the chain is on the cytoplasmic side. A helical transmembrane segment spans residues 2442–2462 (KVGQIILILVSMAAVVVNPSV). The Lumenal portion of the chain corresponds to 2463 to 2467 (RTVRE). Residues 2468 to 2488 (AGILTTAAAVTLWENGASSVW) form a helical membrane-spanning segment. The Cytoplasmic portion of the chain corresponds to 2489 to 3430 (NATTAIGLCH…DTIVVEDTVL (942 aa)). Residues 2526 to 2791 (GGAKGRTLGE…DVNLGSGTRA (266 aa)) enclose the mRNA cap 0-1 NS5-type MT domain. Serine 2581 is an S-adenosyl-L-methionine binding site. At serine 2581 the chain carries Phosphoserine. Lysine 2586 (for 2'-O-MTase activity) is an active-site residue. Positions 2611, 2612, 2629, 2630, 2656, and 2657 each coordinate S-adenosyl-L-methionine. Aspartate 2671 functions as the For 2'-O-MTase activity in the catalytic mechanism. Residue isoleucine 2672 coordinates S-adenosyl-L-methionine. Catalysis depends on for 2'-O-MTase activity residues lysine 2707 and glutamate 2743. Residue tyrosine 2745 coordinates S-adenosyl-L-methionine. A Nuclear localization signal motif is present at residues 2914 to 2916 (RDK). Zn(2+)-binding residues include glutamate 2965, histidine 2969, cysteine 2974, and cysteine 2977. The RdRp catalytic domain occupies 3055 to 3207 (GKVYADDTAG…KPLDDRFATS (153 aa)). Positions 3242, 3258, and 3377 each coordinate Zn(2+). The short motif at 3428–3430 (TVL) is the PDZ-binding element.

The protein in the N-terminal section; belongs to the class I-like SAM-binding methyltransferase superfamily. mRNA cap 0-1 NS5-type methyltransferase family. As to quaternary structure, homodimer. Interacts (via N-terminus) with host EXOC1 (via C-terminus); this interaction results in EXOC1 degradation through the proteasome degradation pathway. Interacts with host DDX56; this interaction plays an important role in genomic RNA encapsidation. In terms of assembly, forms heterodimers with envelope protein E in the endoplasmic reticulum and Golgi. Homodimer; in the endoplasmic reticulum and Golgi. As to quaternary structure, homodimer; Homohexamer when secreted. Interacts with envelope protein E. NS1 interacts with NS4B. Interacts with host complement protein CFH; this interaction leads to the degradation of C3. In terms of assembly, interacts (via N-terminus) with serine protease NS3. Forms a heterodimer with serine protease NS3. May form homooligomers. As to quaternary structure, forms a heterodimer with NS2B. Interacts with NS4B. Interacts with unphosphorylated RNA-directed RNA polymerase NS5; this interaction stimulates RNA-directed RNA polymerase NS5 guanylyltransferase activity. In terms of assembly, interacts with Serine protease/Helicase NS3. Interacts with NS1. Homodimer. Interacts with host STAT2; this interaction inhibits the phosphorylation of the latter, and, when all viral proteins are present (polyprotein), targets STAT2 for degradation. Interacts with host PAF1 complex. In terms of processing, specific enzymatic cleavages in vivo yield mature proteins. Cleavages in the lumen of endoplasmic reticulum are performed by host signal peptidase, whereas cleavages in the cytoplasmic side are performed by serine protease NS3. Signal cleavage at the 2K-4B site requires a prior NS3 protease-mediated cleavage at the 4A-2K site. Cleaved in post-Golgi vesicles by a host furin, releasing the mature small envelope protein M, and peptide pr. This cleavage is incomplete as up to 30% of viral particles still carry uncleaved prM. Post-translationally, not N-glycosylated. In terms of processing, N-glycosylated. The excreted form is glycosylated and this is required for efficient secretion of the protein from infected cells. Acetylated by host KAT5. Acetylation modulates NS3 RNA-binding and unwinding activities and plays an important positive role for viral replication. Post-translationally, phosphorylated on serines residues. This phosphorylation may trigger NS5 nuclear localization.

The protein localises to the virion. It localises to the host nucleus. Its subcellular location is the host cytoplasm. The protein resides in the host perinuclear region. It is found in the secreted. The protein localises to the virion membrane. It localises to the host endoplasmic reticulum membrane. The catalysed reaction is Selective hydrolysis of -Xaa-Xaa-|-Yaa- bonds in which each of the Xaa can be either Arg or Lys and Yaa can be either Ser or Ala.. It catalyses the reaction RNA(n) + a ribonucleoside 5'-triphosphate = RNA(n+1) + diphosphate. It carries out the reaction a ribonucleoside 5'-triphosphate + H2O = a ribonucleoside 5'-diphosphate + phosphate + H(+). The enzyme catalyses ATP + H2O = ADP + phosphate + H(+). The catalysed reaction is a 5'-end (5'-triphosphoguanosine)-ribonucleoside in mRNA + S-adenosyl-L-methionine = a 5'-end (N(7)-methyl 5'-triphosphoguanosine)-ribonucleoside in mRNA + S-adenosyl-L-homocysteine. It catalyses the reaction a 5'-end (N(7)-methyl 5'-triphosphoguanosine)-ribonucleoside in mRNA + S-adenosyl-L-methionine = a 5'-end (N(7)-methyl 5'-triphosphoguanosine)-(2'-O-methyl-ribonucleoside) in mRNA + S-adenosyl-L-homocysteine + H(+). In terms of biological role, plays a role in virus budding by binding to the cell membrane and gathering the viral RNA into a nucleocapsid that forms the core of a mature virus particle. During virus entry, may induce genome penetration into the host cytoplasm after hemifusion induced by the surface proteins. Can migrate to the cell nucleus where it modulates host functions. Overcomes the anti-viral effects of host EXOC1 by sequestering and degrading the latter through the proteasome degradation pathway. Inhibits RNA silencing by interfering with host Dicer. Its function is as follows. Prevents premature fusion activity of envelope proteins in trans-Golgi by binding to envelope protein E at pH6.0. After virion release in extracellular space, gets dissociated from E dimers. Functionally, acts as a chaperone for envelope protein E during intracellular virion assembly by masking and inactivating envelope protein E fusion peptide. prM is the only viral peptide matured by host furin in the trans-Golgi network probably to avoid catastrophic activation of the viral fusion activity in acidic Golgi compartment prior to virion release. prM-E cleavage is inefficient, and many virions are only partially matured. These uncleaved prM would play a role in immune evasion. In terms of biological role, may play a role in virus budding. Exerts cytotoxic effects by activating a mitochondrial apoptotic pathway through M ectodomain. May display a viroporin activity. Binds to host cell surface receptor and mediates fusion between viral and cellular membranes. Envelope protein is synthesized in the endoplasmic reticulum in the form of heterodimer with protein prM. They play a role in virion budding in the ER, and the newly formed immature particle is covered with 60 spikes composed of heterodimer between precursor prM and envelope protein E. The virion is transported to the Golgi apparatus where the low pH causes dissociation of PrM-E heterodimers and formation of E homodimers. prM-E cleavage is inefficient, and many virions are only partially matured. These uncleaved prM would play a role in immune evasion. Its function is as follows. Involved in immune evasion, pathogenesis and viral replication. Once cleaved off the polyprotein, is targeted to three destinations: the viral replication cycle, the plasma membrane and the extracellular compartment. Essential for viral replication. Required for formation of the replication complex and recruitment of other non-structural proteins to the ER-derived membrane structures. Excreted as a hexameric lipoparticle that plays a role against host immune response. Antagonizing the complement function. Binds to the host macrophages and dendritic cells. Inhibits signal transduction originating from Toll-like receptor 3 (TLR3). Functionally, component of the viral RNA replication complex that functions in virion assembly and antagonizes the host alpha/beta interferon antiviral response. In terms of biological role, required cofactor for the serine protease function of NS3. May have membrane-destabilizing activity and form viroporins. Displays three enzymatic activities: serine protease, NTPase and RNA helicase. NS3 serine protease, in association with NS2B, performs its autocleavage and cleaves the polyprotein at dibasic sites in the cytoplasm: C-prM, NS2A-NS2B, NS2B-NS3, NS3-NS4A, NS4A-2K and NS4B-NS5. NS3 RNA helicase binds RNA and unwinds dsRNA in the 3' to 5' direction. NS3 supports the separation of RNA daughter and template strands during viral replication. The helicase part is involved in the inhibition of phosphorylation of host STAT1, and thereby inhibition of host type-I IFN signaling. In addition, NS3 assists the initiation of replication by unwinding the RNA secondary structure in the 3' non-translated region (NTR). Inhibits STAT2 translocation in the nucleus after IFN-alpha treatment. Its function is as follows. Regulates the ATPase activity of the NS3 helicase activity. NS4A allows NS3 helicase to conserve energy during unwinding. Functionally, functions as a signal peptide for NS4B and is required for the interferon antagonism activity of the latter. In terms of biological role, induces the formation of ER-derived membrane vesicles where the viral replication takes place. Inhibits interferon (IFN)-induced host STAT1 phosphorylation and nuclear translocation, thereby preventing the establishment of cellular antiviral state by blocking the IFN-alpha/beta pathway. Inhibits STAT2 translocation in the nucleus after IFN-alpha treatment. Replicates the viral (+) and (-) RNA genome, and performs the capping of genomes in the cytoplasm. NS5 methylates viral RNA cap at guanine N-7 and ribose 2'-O positions. Besides its role in RNA genome replication, also prevents the establishment of cellular antiviral state by blocking the interferon-alpha/beta (IFN-alpha/beta) signaling pathway. Inhibits host TYK2 and STAT2 phosphorylation, thereby preventing activation of JAK-STAT signaling pathway. This Aedes (Tropical bont tick) protein is Genome polyprotein.